The primary structure comprises 62 residues: Kurtoxin-like I (62 aa).

An LCN-type CS-alpha/beta domain is found at 2 to 62 (IDGYPVDNWN…ARIKRGGRCN (61 aa)). Intrachain disulfides connect Cys12–Cys61, Cys16–Cys37, Cys23–Cys44, and Cys27–Cys46.

Expressed by the venom gland.

It is found in the secreted. Functionally, this neurotoxin acts on sodium and calcium channels. Potently inhibits native voltage-gated T-type calcium channel activity in mouse male germ cells and weakly blocks Cav3.3/CACNA1I channels expressed in Xenopus oocytes. In addition, significantly slows the inactivation of activated recombinant sodium channels (Nav1.5/SCN5A). This chain is Kurtoxin-like I, found in Parabuthus granulatus (Granulated thick-tailed scorpion).